The sequence spans 463 residues: Glycine--tRNA ligase (463 aa).

Substrate is bound by residues Arg-102 and Glu-165. Residues 197–199 (RNE), 207–212 (FRTREF), 284–285 (EL), and 328–331 (GLTR) contribute to the ATP site. 212–216 (FEQME) contacts substrate. 324-328 (EPAAG) lines the substrate pocket.

It belongs to the class-II aminoacyl-tRNA synthetase family. As to quaternary structure, homodimer.

The protein resides in the cytoplasm. It carries out the reaction tRNA(Gly) + glycine + ATP = glycyl-tRNA(Gly) + AMP + diphosphate. Its function is as follows. Catalyzes the attachment of glycine to tRNA(Gly). The sequence is that of Glycine--tRNA ligase from Mycobacterium bovis (strain ATCC BAA-935 / AF2122/97).